Consider the following 153-residue polypeptide: Transcriptional repressor NrdR (153 aa).

A zinc finger lies at 3–34 (CPFCHNQDTRVIDSRAAEEGTAIRRRRSCPAC). Positions 46–136 (LMVTKRSGAT…VYRSFESLED (91 aa)) constitute an ATP-cone domain.

Belongs to the NrdR family. Zn(2+) is required as a cofactor.

In terms of biological role, negatively regulates transcription of bacterial ribonucleotide reductase nrd genes and operons by binding to NrdR-boxes. This is Transcriptional repressor NrdR from Thermobifida fusca (strain YX).